The chain runs to 112 residues: Peptidyl-prolyl cis-trans isomerase (112 aa).

A disordered region spans residues 1-22 (MGVEKQVISSGNGQDFPKPGDR). The 89-residue stretch at 20–108 (GDRITMHYTG…LFDVELLAIN (89 aa)) folds into the PPIase FKBP-type domain.

It belongs to the FKBP-type PPIase family. FKBP1 subfamily.

It is found in the cytoplasm. Its subcellular location is the nucleus. The catalysed reaction is [protein]-peptidylproline (omega=180) = [protein]-peptidylproline (omega=0). PPIases accelerate the folding of proteins. It catalyzes the cis-trans isomerization of proline imidic peptide bonds in oligopeptides. Has an important role in sexual development and serves as the target for rapamycin action. The sequence is that of Peptidyl-prolyl cis-trans isomerase (fkh1) from Schizosaccharomyces pombe (strain 972 / ATCC 24843) (Fission yeast).